Reading from the N-terminus, the 439-residue chain is Ribosomal protein uS12 methylthiotransferase RimO (439 aa).

The MTTase N-terminal domain occupies 6-116 (GKVGFVSLGC…VMNQVHQVAP (111 aa)). Positions 15, 51, 80, 148, 152, and 155 each coordinate [4Fe-4S] cluster. A Radical SAM core domain is found at 134-371 (LTPKHYAYLK…MEVQQRISAS (238 aa)). In terms of domain architecture, TRAM spans 374–439 (QAKIGKRMDV…DEYDLWGRPV (66 aa)).

It belongs to the methylthiotransferase family. RimO subfamily. [4Fe-4S] cluster serves as cofactor.

It is found in the cytoplasm. It carries out the reaction L-aspartate(89)-[ribosomal protein uS12]-hydrogen + (sulfur carrier)-SH + AH2 + 2 S-adenosyl-L-methionine = 3-methylsulfanyl-L-aspartate(89)-[ribosomal protein uS12]-hydrogen + (sulfur carrier)-H + 5'-deoxyadenosine + L-methionine + A + S-adenosyl-L-homocysteine + 2 H(+). In terms of biological role, catalyzes the methylthiolation of an aspartic acid residue of ribosomal protein uS12. The protein is Ribosomal protein uS12 methylthiotransferase RimO of Hahella chejuensis (strain KCTC 2396).